The chain runs to 238 residues: DNA repair protein RecO (238 aa).

The protein belongs to the RecO family.

Involved in DNA repair and RecF pathway recombination. This Anaplasma marginale (strain St. Maries) protein is DNA repair protein RecO.